Reading from the N-terminus, the 1642-residue chain is Cortactin-binding protein 2 (1642 aa).

Disordered stretches follow at residues 1 to 27 (MATDGASCEPDFSRAPEDAAGAPAEAA), 203 to 222 (KKKTSALEEELATEKRRSTE), 366 to 433 (IGAS…HPGL), 446 to 471 (GSNANDPDQNGNTTQSPPSRDVSPTS), and 491 to 611 (RFTS…PSID). Positions 119 to 276 (RKMQERMSTQ…EQLKRGTDSK (158 aa)) form a coiled coil. Residues 385–394 (GPSTGSTADL) are compositionally biased toward polar residues. Residues 395–407 (TSSPTPVPSTVSP) are compositionally biased toward low complexity. At Arg491 the chain carries Asymmetric dimethylarginine. The span at 497-506 (AGAPPRPGAP) shows a compositional bias: pro residues. A compositionally biased stretch (polar residues) spans 576 to 586 (TVASPPSTLPQ). ANK repeat units follow at residues 702–732 (GRPTLLQQAAAQGNVTLLSMLLNEEGLDINY), 736–765 (DGHSALYSAAKNGHTDCVRLLLNAEAQVNV), 769–798 (NGFTPLCAAAAQGHFKCVELLIAYDANINH), 802–831 (GGQTPLYLACKNGNKECIKLLLEAGTDRSV), 835–864 (DGWTPIHAAVDTGNVDSLKLLMYHRAPAHG), and 904–934 (EGWTAAHIAASKGFKNCLEVLCRHGGLEPER). The segment at 1440–1469 (ESGAWRKVSTSPRKKSGRFSSPTWNKPDLS) is disordered. Phosphoserine is present on Ser1513. Positions 1546-1642 (RRFDSSGNNP…NSRDLEPTQK (97 aa)) are disordered. Polar residues-rich tracts occupy residues 1552–1563 (GNNPVFSATVNN) and 1571–1588 (KEVSPLSSHQTTECSNSK). Residues 1613–1627 (SQNTKRSSSSSNTRQ) show a composition bias toward low complexity.

In terms of assembly, interacts with CTTN/cortactin SH3 domain. Interacts with STRN, STRN4/zinedin and MOB4/phocein; this interactions mediate the association with the STRIPAK core complex and may regulate dendritic spine distribution of the STRIPAK complex in hippocampal neurons. Activation of glutamate receptors weakens the interaction with STRN and STRN4.

The protein localises to the cytoplasm. It is found in the cell cortex. It localises to the cell projection. Its subcellular location is the dendritic spine. In terms of biological role, regulates the dendritic spine distribution of CTTN/cortactin in hippocampal neurons, and thus controls dendritic spinogenesis and dendritic spine maintenance. Associates with the striatin-interacting phosphatase and kinase (STRIPAK) core complex to regulate dendritic spine distribution of the STRIPAK complex in hippocampal neurons. This chain is Cortactin-binding protein 2 (CTTNBP2), found in Muntiacus reevesi (Reeves' muntjac).